A 411-amino-acid polypeptide reads, in one-letter code: Alpha-N-acetylgalactosaminidase (411 aa).

Positions 1–17 (MLLKTVLLLGHVAQVLM) are cleaved as a signal peptide. Intrachain disulfides connect Cys38/Cys80 and Cys42/Cys49. 78-79 (DD) contributes to the substrate binding site. N-linked (GlcNAc...) asparagine glycosylation is present at Asn124. Cysteines 127 and 158 form a disulfide. Lys154 contacts substrate. Asp156 serves as the catalytic Nucleophile. An N-linked (GlcNAc...) asparagine glycan is attached at Asn177. Cys187 and Cys209 are disulfide-bonded. Ser188 is a substrate binding site. A glycan (N-linked (GlcNAc...) asparagine) is linked at Asn201. Arg213 and Asp217 together coordinate substrate. The active-site Proton donor is the Asp217. Phosphoserine occurs at positions 322 and 332. N-linked (GlcNAc...) asparagine glycans are attached at residues Asn359 and Asn385.

This sequence belongs to the glycosyl hydrolase 27 family. In terms of assembly, homodimer.

It localises to the lysosome. It carries out the reaction Cleavage of non-reducing alpha-(1-&gt;3)-N-acetylgalactosamine residues from human blood group A and AB mucin glycoproteins, Forssman hapten and blood group A lacto series glycolipids.. It catalyses the reaction a neolactoside IV(3)-alpha-GalNAc,IV(2)-alpha-Fuc-nLc4Cer(d18:1(4E)) + H2O = a neolactoside IV(2)-alpha-Fuc-nLc4Cer(d18:1(4E)) + N-acetyl-alpha-D-galactosamine. The enzyme catalyses a neolactoside IV(3)-alpha-GalNAc,IV(2)-alpha-Fuc-nLc4Cer(d18:0) + H2O = a neolactoside IV(2)-alpha-Fuc-nLc4Cer(d18:0) + N-acetyl-alpha-D-galactosamine. The catalysed reaction is a globoside IV3GalNAc-Gb4Cer + H2O = N-acetyl-alpha-D-galactosamine + a globoside Gb4Cer. Functionally, removes terminal alpha-N-acetylgalactosamine residues from glycolipids and glycopeptides. Required for the breakdown of glycolipids. This is Alpha-N-acetylgalactosaminidase from Homo sapiens (Human).